Here is a 138-residue protein sequence, read N- to C-terminus: Acid shock protein (138 aa).

The first 21 residues, 1-21 (MKKVLALIVAATMGLSSVAFA), serve as a signal peptide directing secretion. Residues 22–85 (ADAVAPAAAA…TKKAPAQKAQ (64 aa)) constitute a propeptide that is removed on maturation. A compositionally biased stretch (low complexity) spans 31-50 (APAATTTAAPAAAATKAPAK). The segment at 31–138 (APAATTTAAP…ATKKAAPAAK (108 aa)) is disordered. Basic residues-rich tracts occupy residues 51–77 (ATHH…KATK) and 122–131 (AAKKHHKATK).

Belongs to the Asr family. Post-translationally, proteolytic processing gives rise to the active protein.

It localises to the periplasm. In terms of biological role, required for growth and/or survival at acidic conditions. This chain is Acid shock protein, found in Serratia proteamaculans (strain 568).